The following is a 97-amino-acid chain: Putative pterin-4-alpha-carbinolamine dehydratase (97 aa).

This sequence belongs to the pterin-4-alpha-carbinolamine dehydratase family.

The enzyme catalyses (4aS,6R)-4a-hydroxy-L-erythro-5,6,7,8-tetrahydrobiopterin = (6R)-L-erythro-6,7-dihydrobiopterin + H2O. The sequence is that of Putative pterin-4-alpha-carbinolamine dehydratase from Rhizorhabdus wittichii (strain DSM 6014 / CCUG 31198 / JCM 15750 / NBRC 105917 / EY 4224 / RW1) (Sphingomonas wittichii).